The primary structure comprises 346 residues: Phosphoribosylformylglycinamidine cyclo-ligase (346 aa).

The protein belongs to the AIR synthase family.

The protein resides in the cytoplasm. It catalyses the reaction 2-formamido-N(1)-(5-O-phospho-beta-D-ribosyl)acetamidine + ATP = 5-amino-1-(5-phospho-beta-D-ribosyl)imidazole + ADP + phosphate + H(+). It participates in purine metabolism; IMP biosynthesis via de novo pathway; 5-amino-1-(5-phospho-D-ribosyl)imidazole from N(2)-formyl-N(1)-(5-phospho-D-ribosyl)glycinamide: step 2/2. This Bacillus anthracis (strain A0248) protein is Phosphoribosylformylglycinamidine cyclo-ligase.